Here is a 220-residue protein sequence, read N- to C-terminus: MAIIMAESSYERRIKALYEKQIRMEALEGKFIKKVFKFNSVLLDIKETSARHQRKVGKMQKVVTERREELGRRVTFMGHLTQEVEAIKLRNLAMKDQIKQQKMLNNQRKNEIMERIHTLSKTTGTYVNQEALPARVKGVTVIPGDRRNQLIPFDLNATDDEGLNSLCQHLESLNVDVSQWQQLVSLAMDVALGARAPTTPPKEAANCKSIIEIDLTSPTS.

Positions histidine 79 to glutamate 114 form a coiled coil.

Belongs to the SPC25 family. In terms of assembly, component of the Ndc80 complex, which is composed of Ndc80, Nuf2 and Spc25.

It localises to the nucleus. The protein localises to the chromosome. Its subcellular location is the centromere. The protein resides in the kinetochore. Functionally, acts as a component of the essential kinetochore-associated Ndc80 complex, which is required for chromosome segregation and spindle checkpoint activity during meiosis and mitosis. Required for kinetochore integrity and the organization of stable microtubule binding sites in the outer plate of the kinetochore. Participates in SAC signaling that responds specifically to disruptions in spindle microtubule dynamics. The NDC80 complex synergistically enhances the affinity of the SKA1 complex for microtubules and may allow the NDC80 complex to track depolymerizing microtubules. This is Kinetochore protein Spc25 from Drosophila orena (Fruit fly).